The chain runs to 103 residues: MMSEKFALVLLVACIAFIGIETSPINSDSWKDGFCGENEAYDSMRRGCEKRCDDHNPTFCFKFTTVCWCEKGYVRDKSDTCIKVEDCPNVSENLEFSETIIGM.

The signal sequence occupies residues M1 to T22. The region spanning C35–C87 is the TIL domain.

It belongs to the polydnaviridae EGF-like motif protein family.

The protein is Probable protease inhibitor Egf0.4a (O4) of Microplitis demolitor (Parasitoid wasp).